Here is a 180-residue protein sequence, read N- to C-terminus: MEKIHATTVVAIRHNGQISIGADGQATLGNTVVKDYVKKVRKLMEGKVLCGFAGSTADAFTLLERFEEKLNTYAGNMKRAAIELAKDWRTDRYLRKLEAMMIVVNKDELLLISGTGDVIEPDNDILSIGSGSMYAQSAAAALKKHATHLSAPEMVRESLSIAADICIYTNHNFVIETAVA.

The active site involves threonine 7. Na(+)-binding residues include alanine 163, cysteine 166, and threonine 169.

It belongs to the peptidase T1B family. HslV subfamily. As to quaternary structure, a double ring-shaped homohexamer of HslV is capped on each side by a ring-shaped HslU homohexamer. The assembly of the HslU/HslV complex is dependent on binding of ATP.

Its subcellular location is the cytoplasm. The catalysed reaction is ATP-dependent cleavage of peptide bonds with broad specificity.. Allosterically activated by HslU binding. Its function is as follows. Protease subunit of a proteasome-like degradation complex believed to be a general protein degrading machinery. This chain is ATP-dependent protease subunit HslV, found in Cytophaga hutchinsonii (strain ATCC 33406 / DSM 1761 / CIP 103989 / NBRC 15051 / NCIMB 9469 / D465).